Here is a 282-residue protein sequence, read N- to C-terminus: Bis(5'-nucleosyl)-tetraphosphatase, symmetrical (282 aa).

Belongs to the Ap4A hydrolase family.

It carries out the reaction P(1),P(4)-bis(5'-adenosyl) tetraphosphate + H2O = 2 ADP + 2 H(+). Functionally, hydrolyzes diadenosine 5',5'''-P1,P4-tetraphosphate to yield ADP. The sequence is that of Bis(5'-nucleosyl)-tetraphosphatase, symmetrical from Salmonella paratyphi C (strain RKS4594).